The primary structure comprises 497 residues: Serine hydroxymethyltransferase, mitochondrial (497 aa).

The transit peptide at 1-27 (MFIRRLHTSSRRLTCGEALRACQQTGA) directs the protein to the mitochondrion. An N6-(pyridoxal phosphate)lysine modification is found at Lys-272.

This sequence belongs to the SHMT family. In terms of assembly, homotetramer. Requires pyridoxal 5'-phosphate as cofactor.

The protein resides in the mitochondrion. It carries out the reaction (6R)-5,10-methylene-5,6,7,8-tetrahydrofolate + glycine + H2O = (6S)-5,6,7,8-tetrahydrofolate + L-serine. The protein operates within one-carbon metabolism; tetrahydrofolate interconversion. Functionally, interconversion of serine and glycine. In Eremothecium gossypii (strain ATCC 10895 / CBS 109.51 / FGSC 9923 / NRRL Y-1056) (Yeast), this protein is Serine hydroxymethyltransferase, mitochondrial (SHM1).